Reading from the N-terminus, the 592-residue chain is Keratin, type II cytoskeletal 5 (592 aa).

Over residues 1-18 the composition is skewed to low complexity; it reads MSRQSSVSFRSGGSRSFS. The tract at residues 1 to 20 is disordered; sequence MSRQSSVSFRSGGSRSFSTA. Residues 1–169 form a head region; that stretch reads MSRQSSVSFR…DPSIQRVRTE (169 aa). Ser-5, Ser-8, Ser-16, and Ser-21 each carry phosphoserine. The residue at position 24 (Thr-24) is a Phosphothreonine; by CDK1. Residues Ser-26, Ser-36, Ser-50, Ser-64, Ser-71, Ser-75, and Ser-82 each carry the phosphoserine modification. Thr-153 is modified (phosphothreonine; by CDK1). Thr-168 is subject to Phosphothreonine; by AURKB. Residues 170–205 form a coil 1A region; the sequence is EREQIKTLNNKFASFIDKVRFLEQQNKVLDTKWTLL. Positions 170–483 constitute an IF rod domain; that stretch reads EREQIKTLNN…KLLEGEECRL (314 aa). The tract at residues 206–224 is linker 1; that stretch reads QEQGTKTVRQNLEPLFEQY. Positions 225 to 317 are coil 1B; sequence INNLRRQLDS…FFDAELSQMQ (93 aa). Residues 318–340 form a linker 12 region; sequence THVSDTSVVLSMDNNRNLDLDSI. A coil 2 region spans residues 341-479; sequence IAEVKAQYEE…ATYRKLLEGE (139 aa). The segment at 480–592 is tail; sequence ECRLSGEGVG…TSSSRKSFKS (113 aa). The tract at residues 568-592 is disordered; that stretch reads GSGGGSSSSVKFVSTTSSSRKSFKS. The span at 574-592 shows a compositional bias: low complexity; it reads SSSVKFVSTTSSSRKSFKS.

The protein belongs to the intermediate filament family. Heterodimer of a type I and a type II keratin. Heterodimer with type I keratin KRT25 leading to the formation of keratin intermediate filament (KIF) network. Forms a heterodimer (via 2B domains) with KRT14 (via 2B domains). Interacts with TCHP. Interacts with EPPK1. Interacts with AMELX. Interacts with PKP1 (via N-terminus) and PKP2. Phosphorylated by CDK1, AURKB and Rho-kinase, phosphorylation is regulated by the cell cycle. Thr-24 phosphorylation, mediated by CDK1, peaks during prometaphase or metaphase cells with phosphorylated filamentous structures evident throughout the cytoplasm during early mitosis. CDK1 phosphorylates Thr-24 in mitotic cells at the site of injury. In terms of processing, O-glycosylated.

The protein localises to the cytoplasm. Required for the formation of keratin intermediate filaments in the basal epidermis and maintenance of the skin barrier in response to mechanical stress. Regulates the recruitment of Langerhans cells to the epidermis, potentially by modulation of the abundance of macrophage chemotactic cytokines, macrophage inflammatory cytokines and CTNND1 localization in keratinocytes. This chain is Keratin, type II cytoskeletal 5 (KRT5), found in Pan troglodytes (Chimpanzee).